We begin with the raw amino-acid sequence, 1014 residues long: Klotho (1014 aa).

Residues 1–34 form the signal peptide; the sequence is MPARAPPRRLPRLLLLRLLSLHLLLLTLRARCLS. Over 35–983 the chain is Extracellular; the sequence is AEPGQGAQTW…GCGFFQTRKS (949 aa). 2 glycosyl hydrolase-1 regions span residues 59 to 508 and 517 to 955; these read LHDT…NNGF and LEGT…NNGF. N-linked (GlcNAc...) asparagine glycosylation is found at Asn161, Asn285, Asn346, Asn609, Asn614, and Asn696. The chain crosses the membrane as a helical span at residues 984–1004; sequence LLAFISFLVFAFVTSLALIYY. Topologically, residues 1005–1014 are cytoplasmic; the sequence is YSKKGRRRYK.

It belongs to the glycosyl hydrolase 1 family. Klotho subfamily. As to quaternary structure, homodimer. Interacts with FGF23 and FGFR1. In terms of processing, N-glycosylated. In terms of tissue distribution, present in cortical renal tubules and the parathyroid (at protein level). Strongly expressed in kidney. Expressed at low levels in brain, lung, intestine and ovaries.

The protein resides in the cell membrane. The protein localises to the apical cell membrane. It localises to the secreted. It carries out the reaction a beta-D-glucuronoside + H2O = D-glucuronate + an alcohol. Functionally, may have weak glycosidase activity towards glucuronylated steroids. However, it lacks essential active site Glu residues at positions 241 and 874, suggesting it may be inactive as a glycosidase in vivo. May be involved in the regulation of calcium and phosphorus homeostasis by inhibiting the synthesis of active vitamin D. Essential factor for the specific interaction between FGF23 and FGFR1. Its function is as follows. The Klotho peptide generated by cleavage of the membrane-bound isoform may be an anti-aging circulating hormone which would extend life span by inhibiting insulin/IGF1 signaling. This Rattus norvegicus (Rat) protein is Klotho (Kl).